A 606-amino-acid chain; its full sequence is Transmembrane 9 superfamily member 1 (606 aa).

The signal sequence occupies residues 1 to 27 (MTVVGNPRSWSCRWLPILILLLGTGHG). Asparagine 178 carries an N-linked (GlcNAc...) asparagine glycan. The next 4 membrane-spanning stretches (helical) occupy residues 237–257 (LSII…AVIL), 310–330 (VLGV…MALL), 339–359 (GAIN…SGYV), and 373–393 (VWNI…TWSV). The N-linked (GlcNAc...) asparagine glycan is linked to asparagine 401. A run of 4 helical transmembrane segments spans residues 412–432 (ILLL…IGGI), 469–489 (VGGF…FATV), 499–519 (GILF…SIAL), and 535–555 (SVLS…FYYA). A glycan (N-linked (GlcNAc...) asparagine) is linked at asparagine 559. The helical transmembrane segment at 570-590 (FGYSLLTGYVFFLMLGTISFF) threads the bilayer.

Belongs to the nonaspanin (TM9SF) (TC 9.A.2) family.

It is found in the lysosome membrane. The protein resides in the cytoplasmic vesicle. Its subcellular location is the autophagosome membrane. In terms of biological role, plays an essential role in autophagy. This is Transmembrane 9 superfamily member 1 (TM9SF1) from Pongo abelii (Sumatran orangutan).